Here is a 558-residue protein sequence, read N- to C-terminus: Urease subunit alpha 2 (558 aa).

In terms of domain architecture, Urease spans 129-558 (GAVDTHVHLL…SVSLNRLYFL (430 aa)). Residues H134, H136, and K214 each coordinate Ni(2+). An N6-carboxylysine modification is found at K214. Substrate is bound at residue H216. 2 residues coordinate Ni(2+): H243 and H269. Residue H317 is the Proton donor of the active site. A Ni(2+)-binding site is contributed by D357.

Belongs to the metallo-dependent hydrolases superfamily. Urease alpha subunit family. As to quaternary structure, may form a heterohexamer of 3 UreC (alpha) and 3 UreAB (gamma/beta) subunits. May also form a heterotrimer of UreA (gamma), UreB (beta) and UreC (alpha) subunits. Three heterotrimers associate to form the active enzyme. It depends on Ni cation as a cofactor. In terms of processing, carboxylation allows a single lysine to coordinate two nickel ions.

It localises to the cytoplasm. It carries out the reaction urea + 2 H2O + H(+) = hydrogencarbonate + 2 NH4(+). Its pathway is nitrogen metabolism; urea degradation; CO(2) and NH(3) from urea (urease route): step 1/1. This chain is Urease subunit alpha 2, found in Streptomyces coelicolor (strain ATCC BAA-471 / A3(2) / M145).